Consider the following 456-residue polypeptide: Ribosomal RNA small subunit methyltransferase F (456 aa).

S-adenosyl-L-methionine-binding positions include 109-115 (AAAPGGK), Glu-133, Arg-138, and Asp-177. Cys-230 (nucleophile) is an active-site residue.

Belongs to the class I-like SAM-binding methyltransferase superfamily. RsmB/NOP family.

The protein localises to the cytoplasm. It carries out the reaction cytidine(1400) in 16S rRNA + S-adenosyl-L-methionine = 5-methylcytidine(1400) in 16S rRNA + S-adenosyl-L-homocysteine + H(+). It catalyses the reaction cytidine(1404) in 16S rRNA + S-adenosyl-L-methionine = 5-methylcytidine(1404) in 16S rRNA + S-adenosyl-L-homocysteine + H(+). The enzyme catalyses cytidine(1407) in 16S rRNA + S-adenosyl-L-methionine = 5-methylcytidine(1407) in 16S rRNA + S-adenosyl-L-homocysteine + H(+). Functionally, specifically methylates the cytosines at positions 1400 (m5C1400), 1404 (m5C1404) and 1407 (m5C1407) of 16S rRNA. C1400, C1404 and C1407 are methylated in a 30S subunit substrate, but only C1400 and C1404 are methylated when naked 16S rRNA is the substrate. Methylation by RsmF may facilitate growth at temperatures outside the optimal growth temperature. This chain is Ribosomal RNA small subunit methyltransferase F, found in Thermus thermophilus (strain ATCC 27634 / DSM 579 / HB8).